Here is a 66-residue protein sequence, read N- to C-terminus: Small ribosomal subunit protein eS27 (66 aa).

Zn(2+)-binding residues include cysteine 21, cysteine 24, cysteine 40, and cysteine 43. Residues cysteine 21–cysteine 43 form a C4-type zinc finger.

It belongs to the eukaryotic ribosomal protein eS27 family. As to quaternary structure, part of the 30S ribosomal subunit. Requires Zn(2+) as cofactor.

This is Small ribosomal subunit protein eS27 from Hyperthermus butylicus (strain DSM 5456 / JCM 9403 / PLM1-5).